The primary structure comprises 536 residues: Proto-oncogene tyrosine-protein kinase Yrk (536 aa).

G2 carries the N-myristoyl glycine lipid modification. 2 S-palmitoyl cysteine lipidation sites follow: C3 and C6. Residues 10-36 (ISGKGQGGSGTGTPAHPPSQYDPDPTQ) are disordered. One can recognise an SH3 domain in the interval 81-142 (GGVTLFIALY…PSNYVAPVDS (62 aa)). One can recognise an SH2 domain in the interval 148–245 (WYFGKIGRKD…GLCCRLAVPC (98 aa)). In terms of domain architecture, Protein kinase spans 270–523 (LQLLQKLGNG…YLQSFLEDYF (254 aa)). ATP contacts are provided by residues 276–284 (LGNGQFGEV) and K298. D389 (proton acceptor) is an active-site residue. Residue Y419 is modified to Phosphotyrosine; by autocatalysis. Y530 carries the post-translational modification Phosphotyrosine.

The protein belongs to the protein kinase superfamily. Tyr protein kinase family. SRC subfamily. Post-translationally, phosphorylated. As to expression, there are elevated levels of this protein in neural and hematopoietic tissues.

It carries out the reaction L-tyrosyl-[protein] + ATP = O-phospho-L-tyrosyl-[protein] + ADP + H(+). In terms of biological role, may participate in signaling pathways. This is Proto-oncogene tyrosine-protein kinase Yrk (YRK) from Gallus gallus (Chicken).